Here is a 91-residue protein sequence, read N- to C-terminus: Small ribosomal subunit protein bS18 (91 aa).

It belongs to the bacterial ribosomal protein bS18 family. As to quaternary structure, part of the 30S ribosomal subunit. Forms a tight heterodimer with protein bS6.

Its function is as follows. Binds as a heterodimer with protein bS6 to the central domain of the 16S rRNA, where it helps stabilize the platform of the 30S subunit. This Paraburkholderia xenovorans (strain LB400) protein is Small ribosomal subunit protein bS18.